The chain runs to 532 residues: Chromobox protein homolog 2 (532 aa).

An involved in the interaction with H3C15 and H3C1 region spans residues 1-66; sequence MEELSSVGEQ…AFQKKEHEKE (66 aa). Positions 12-70 constitute a Chromo domain; the sequence is FAAECILSKRLRKGKLEYLVKWRGWSSKHNSWEPEENILDPRLLLAFQKKEHEKEVQNR. Positions 60 to 69 are enriched in basic and acidic residues; that stretch reads KKEHEKEVQN. The segment at 60–204 is disordered; the sequence is KKEHEKEVQN…APASKLPPPL (145 aa). Residues 70 to 82 are compositionally biased toward basic residues; sequence RKRGKRPRGRPRK. Positions 75–87 form a DNA-binding region, a.T hook; it reads RPRGRPRKLTAMS. Low complexity predominate over residues 103–119; sequence KSKSSSSSSSSTSSSSS. A compositionally biased stretch (basic and acidic residues) spans 128–140; it reads LDAKRGPRGRETH. Glycyl lysine isopeptide (Lys-Gly) (interchain with G-Cter in SUMO2) cross-links involve residues lysine 146 and lysine 153. A Nuclear localization signal motif is present at residues 163-168; it reads KRGRKP. At arginine 247 the chain carries Asymmetric dimethylarginine; alternate. The residue at position 247 (arginine 247) is an Omega-N-methylarginine; alternate. Disordered stretches follow at residues 296–348 and 379–493; these read KGEL…PAPT and KGVP…SQDW. Serine 302 carries the phosphoserine modification. The span at 464–478 shows a compositional bias: low complexity; it reads SSSSDSDPDSASPPS. The segment covering 479-493 has biased composition (polar residues); the sequence is TGQNPSVSVQTSQDW.

In terms of assembly, component of a PRC1-like complex. The composition of the PRC1 complex may differ between the PRC1 complex in pluripotent embryonic stem cells containing RNF2, CBX7 and PCGF2, and the PRC1 complex in differentiating cells containing RNF2, CBX2, CBX4 and BMI1. May interact with H3C15, H3C1 and RNF2. Interacts (via chromodomain) with histone H3K9Me3 and H3K27me3.

The protein localises to the nucleus. It is found in the chromosome. Its function is as follows. Component of a Polycomb group (PcG) multiprotein PRC1-like complex, a complex class required to maintain the transcriptionally repressive state of many genes, including Hox genes, throughout development. PcG PRC1 complex acts via chromatin remodeling and modification of histones; it mediates monoubiquitination of histone H2A 'Lys-119', rendering chromatin heritably changed in its expressibility. Binds to histone H3 trimethylated at 'Lys-9' (H3K9me3) or at 'Lys-27' (H3K27me3). Plays a role in the lineage differentiation of the germ layers in embryonic development. Involved in sexual development, acting as activator of NR5A1 expression. This is Chromobox protein homolog 2 (CBX2) from Homo sapiens (Human).